The following is a 426-amino-acid chain: Divalent metal cation transporter MntH (426 aa).

The next 10 membrane-spanning stretches (helical) occupy residues 31–51, 58–78, 134–156, 169–189, 208–228, 256–276, 298–318, 337–357, 363–383, and 402–422; these read WYLLGPAFVAAIAYVDPGNVA, AQFGYLQLWVVVVANVLAGLV, ILFRVSLLLGGVITGTVSLLLLM, VITGLLFVIVVGFTSSFFVAT, SVLLAAAIIGATVMPHAVYLH, VILAMTIAGIVNTAMLLVAAI, LGATIAMLFAIGLLASSLASA, IPMLIRRLITLCPAIAILALG, ALVLSQIVLSFGIPFAVLPLV, and TVLGWAVAILVSLLNVVLIYL.

Belongs to the NRAMP family.

The protein localises to the cell membrane. Functionally, h(+)-stimulated, divalent metal cation uptake system. The sequence is that of Divalent metal cation transporter MntH from Mycobacterium leprae (strain TN).